A 226-amino-acid polypeptide reads, in one-letter code: ATP synthase F(0) complex subunit a (226 aa).

M1 carries the N-formylmethionine modification. A run of 6 helical transmembrane segments spans residues 9-29, 68-88, 97-117, 138-158, 164-184, and 189-209; these read FITP…FPSL, WTLM…LGLL, QLSM…ITGF, IPML…ALAV, ITAG…LMSI, and ALIT…VAMI.

Belongs to the ATPase A chain family. As to quaternary structure, component of the ATP synthase complex composed at least of ATP5F1A/subunit alpha, ATP5F1B/subunit beta, ATP5MC1/subunit c (homooctomer), MT-ATP6/subunit a, MT-ATP8/subunit 8, ATP5ME/subunit e, ATP5MF/subunit f, ATP5MG/subunit g, ATP5MK/subunit k, ATP5MJ/subunit j, ATP5F1C/subunit gamma, ATP5F1D/subunit delta, ATP5F1E/subunit epsilon, ATP5PF/subunit F6, ATP5PB/subunit b, ATP5PD/subunit d, ATP5PO/subunit OSCP. ATP synthase complex consists of a soluble F(1) head domain (subunits alpha(3) and beta(3)) - the catalytic core - and a membrane F(0) domain - the membrane proton channel (subunits c, a, 8, e, f, g, k and j). These two domains are linked by a central stalk (subunits gamma, delta, and epsilon) rotating inside the F1 region and a stationary peripheral stalk (subunits F6, b, d, and OSCP). Interacts with DNAJC30; interaction is direct.

Its subcellular location is the mitochondrion inner membrane. The enzyme catalyses H(+)(in) = H(+)(out). Functionally, subunit a, of the mitochondrial membrane ATP synthase complex (F(1)F(0) ATP synthase or Complex V) that produces ATP from ADP in the presence of a proton gradient across the membrane which is generated by electron transport complexes of the respiratory chain. ATP synthase complex consist of a soluble F(1) head domain - the catalytic core - and a membrane F(1) domain - the membrane proton channel. These two domains are linked by a central stalk rotating inside the F(1) region and a stationary peripheral stalk. During catalysis, ATP synthesis in the catalytic domain of F(1) is coupled via a rotary mechanism of the central stalk subunits to proton translocation. With the subunit c (ATP5MC1), forms the proton-conducting channel in the F(0) domain, that contains two crucial half-channels (inlet and outlet) that facilitate proton movement from the mitochondrial intermembrane space (IMS) into the matrix. Protons are taken up via the inlet half-channel and released through the outlet half-channel, following a Grotthuss mechanism. The sequence is that of ATP synthase F(0) complex subunit a from Bos taurus (Bovine).